Consider the following 244-residue polypeptide: Membrane-spanning 4-domains subfamily A member 6B (244 aa).

Residues 1–46 (MIPQVVTSETVAMISPNGMSLPQTDKPQPFHQWQDSLKKHLKAEIK) are Cytoplasmic-facing. A helical transmembrane segment spans residues 47–67 (VMAAIQIMCAVMVLSLGIILA). Residues 68 to 84 (SVPSNLHFTSVFSVLLK) lie on the Extracellular side of the membrane. A helical membrane pass occupies residues 85 to 105 (SGYPFIGALFFIVSGILSIVT). Over 106 to 121 (ETKSTKILVDSSLTLN) the chain is Cytoplasmic. The chain crosses the membrane as a helical span at residues 122 to 142 (ILSVSFAFMGIIIISVSLAGL). Topologically, residues 143–176 (HPASEQCLQSKELRPTEYHYYQFLDRNECFAAKS) are extracellular. The helical transmembrane segment at 177 to 197 (VLAGVFSLMLISTMLELGLAV) threads the bilayer. Topologically, residues 198-244 (LTAMLWWKQSHSNIPGNVMFLPHSSNNDSNMESKVLCNPSYEEQLVC) are cytoplasmic.

It belongs to the MS4A family. In terms of tissue distribution, expressed at high levels in thymus, spleen, and peripheral lymph nodes, with less abundant levels in non-lymphoid tissues.

It is found in the membrane. Functionally, may be involved in signal transduction as a component of a multimeric receptor complex. The protein is Membrane-spanning 4-domains subfamily A member 6B (Ms4a6b) of Mus musculus (Mouse).